Reading from the N-terminus, the 296-residue chain is Myeloid differentiation primary response protein MyD88 (296 aa).

The region spanning 54 to 109 (MDFEYLEIRQLETQADPTGRLLDAWQGRPGASVGRLLELLTKLGRDDVLLELGPSI) is the Death domain. The tract at residues 110–155 (EEDCQKYILKQQQEEAEKPLQVAAVDSSVPRTAELAGITTLDDPLG) is intermediate domain. Residues 159–293 (ERFDAFICYC…WFWTRLAKAL (135 aa)) form the TIR domain. S244 carries the phosphoserine modification.

In terms of assembly, homodimer. Also forms heterodimers with TIRAP. Binds to TLR2, TLR5, IRAK1, IRAK2 and IRAK4 via their respective TIR domains. Interacts with IL18R1. Interacts with BMX, IL1RL1, IKBKE and IRF7. Interacts with LRRFIP1 and LRRFIP2; this interaction positively regulates Toll-like receptor (TLR) signaling in response to agonist. Interacts with FLII. LRRFIP1 and LRRFIP2 compete with FLII for MYD88-binding. Interacts with IRF1. Upon IL1B treatment, forms a complex with PELI1, IRAK1, IRAK4 and TRAF6; this complex recruits MAP3K7/TAK1, TAB1 and TAB2 to mediate NF-kappa-B activation. Direct binding of SMAD6 to PELI1 prevents the complex formation and hence negatively regulates IL1R-TLR signaling and eventually NF-kappa-B-mediated gene expression. May interact with PIK3AP1. Interacts (via TIR domain) with DHX9 (via H2A and OB-fold regions); this interaction is direct. Interacts with OTUD4 deubiquitinase; the interaction is direct. Interacts with TLR4. (Microbial infection) In case of infection, interacts with uropathogenic E.coli protein TcpC; suppressing Toll-like receptor (TLR)-mediated cytokine production. As to quaternary structure, (Microbial infection) In case of infection, interacts with uropathogenic E.faecalis protein TcpF; suppressing Toll-like receptor (TLR)-mediated cytokine production. In terms of assembly, (Microbial infection) In case of infection, interacts with B.melitensis protein TcpB. (Microbial infection) Interacts with human metapneumovirus protein M2-2; this interaction prevents MYD88-mediated cytokine secretion. Ubiquitinated; undergoes 'Lys-63'-linked polyubiquitination. OTUD4 specifically hydrolyzes 'Lys-63'-linked polyubiquitinated MYD88. Deubiquitinated by USP3 that cleaves 'Lys-63'-linked ubiquitin chains leading to inhibition of MYD88-induced NF-kappa-B signaling. Post-translationally, (Microbial infection) Ubiquitinated by human herpesvirus 8 (KSHV) protein RTA/ORF50, leading to proteasomal degradation ans suppression of TLR4 signaling pathway. In terms of tissue distribution, ubiquitous.

The protein resides in the cytoplasm. The protein localises to the nucleus. Its function is as follows. Adapter protein involved in the Toll-like receptor and IL-1 receptor signaling pathway in the innate immune response. Acts via IRAK1, IRAK2, IRF7 and TRAF6, leading to NF-kappa-B activation, cytokine secretion and the inflammatory response. Increases IL-8 transcription. Involved in IL-18-mediated signaling pathway. Activates IRF1 resulting in its rapid migration into the nucleus to mediate an efficient induction of IFN-beta, NOS2/INOS, and IL12A genes. Upon TLR8 activation by GU-rich single-stranded RNA (GU-rich RNA) derived from viruses such as SARS-CoV-2, SARS-CoV and HIV-1, induces IL1B release through NLRP3 inflammasome activation. MyD88-mediated signaling in intestinal epithelial cells is crucial for maintenance of gut homeostasis and controls the expression of the antimicrobial lectin REG3G in the small intestine. This Homo sapiens (Human) protein is Myeloid differentiation primary response protein MyD88.